Reading from the N-terminus, the 438-residue chain is DNA primase DnaG (438 aa).

One can recognise a Toprim domain in the interval 169–243 (DSIIVVEGRA…DIDYVARAPY (75 aa)). Mg(2+)-binding residues include Glu175, Asp217, and Asp219.

It belongs to the archaeal DnaG primase family. In terms of assembly, forms a ternary complex with MCM helicase and DNA. Requires Mg(2+) as cofactor.

It catalyses the reaction ssDNA + n NTP = ssDNA/pppN(pN)n-1 hybrid + (n-1) diphosphate.. RNA polymerase that catalyzes the synthesis of short RNA molecules used as primers for DNA polymerase during DNA replication. This is DNA primase DnaG from Methanococcus maripaludis (strain C5 / ATCC BAA-1333).